A 426-amino-acid chain; its full sequence is 3-phosphoshikimate 1-carboxyvinyltransferase (426 aa).

Residues lysine 22, serine 23, and arginine 27 each coordinate 3-phosphoshikimate. Lysine 22 serves as a coordination point for phosphoenolpyruvate. Residues glycine 96 and arginine 124 each coordinate phosphoenolpyruvate. Serine 170, serine 171, glutamine 172, serine 198, aspartate 314, asparagine 337, and lysine 341 together coordinate 3-phosphoshikimate. Glutamine 172 lines the phosphoenolpyruvate pocket. The Proton acceptor role is filled by aspartate 314. Arginine 345, arginine 387, and lysine 412 together coordinate phosphoenolpyruvate.

This sequence belongs to the EPSP synthase family. As to quaternary structure, monomer.

The protein localises to the cytoplasm. The enzyme catalyses 3-phosphoshikimate + phosphoenolpyruvate = 5-O-(1-carboxyvinyl)-3-phosphoshikimate + phosphate. It functions in the pathway metabolic intermediate biosynthesis; chorismate biosynthesis; chorismate from D-erythrose 4-phosphate and phosphoenolpyruvate: step 6/7. Catalyzes the transfer of the enolpyruvyl moiety of phosphoenolpyruvate (PEP) to the 5-hydroxyl of shikimate-3-phosphate (S3P) to produce enolpyruvyl shikimate-3-phosphate and inorganic phosphate. This Vibrio campbellii (strain ATCC BAA-1116) protein is 3-phosphoshikimate 1-carboxyvinyltransferase.